Reading from the N-terminus, the 160-residue chain is 2-C-methyl-D-erythritol 2,4-cyclodiphosphate synthase (160 aa).

A divalent metal cation is bound by residues aspartate 10 and histidine 12. Residues 10–12 and 36–37 contribute to the 4-CDP-2-C-methyl-D-erythritol 2-phosphate site; these read DVH and HS. An a divalent metal cation-binding site is contributed by histidine 44. 4-CDP-2-C-methyl-D-erythritol 2-phosphate is bound by residues 58–60, 63–67, 102–108, 134–137, phenylalanine 141, and arginine 144; these read DIG, FPDTD, AQAPKMA, and TTTE.

It belongs to the IspF family. As to quaternary structure, homotrimer. A divalent metal cation serves as cofactor.

It catalyses the reaction 4-CDP-2-C-methyl-D-erythritol 2-phosphate = 2-C-methyl-D-erythritol 2,4-cyclic diphosphate + CMP. It functions in the pathway isoprenoid biosynthesis; isopentenyl diphosphate biosynthesis via DXP pathway; isopentenyl diphosphate from 1-deoxy-D-xylulose 5-phosphate: step 4/6. Involved in the biosynthesis of isopentenyl diphosphate (IPP) and dimethylallyl diphosphate (DMAPP), two major building blocks of isoprenoid compounds. Catalyzes the conversion of 4-diphosphocytidyl-2-C-methyl-D-erythritol 2-phosphate (CDP-ME2P) to 2-C-methyl-D-erythritol 2,4-cyclodiphosphate (ME-CPP) with a corresponding release of cytidine 5-monophosphate (CMP). This Shewanella denitrificans (strain OS217 / ATCC BAA-1090 / DSM 15013) protein is 2-C-methyl-D-erythritol 2,4-cyclodiphosphate synthase.